The chain runs to 180 residues: MLKLLSEIGPVIAFFAGFFYGGGIQNATLYMLITSVICITLCYIIDKKVSKLSIISTTVLLVSGSITLISGDSMYIKIKPTILYVIFGIIFLMSGIRKTPFIKYALESIVRLKEESWITLSYRTAAFFFFMAVVNEIVWRNFSDETWVKFKVFGIIPITFIFIVLQLPLLLKNKLPDSKI.

5 consecutive transmembrane segments (helical) span residues 25–45, 49–69, 76–96, 118–138, and 150–170; these read QNAT…CYII, VSKL…ITLI, IKIK…MSGI, ITLS…NEIV, and FKVF…LPLL.

The protein belongs to the YciB family.

Its subcellular location is the cell inner membrane. Its function is as follows. Plays a role in cell envelope biogenesis, maintenance of cell envelope integrity and membrane homeostasis. This chain is Inner membrane-spanning protein YciB, found in Rickettsia akari (strain Hartford).